Consider the following 223-residue polypeptide: MKQSVLDLQATIQETLGDAIVVSDIKLDELTVELAPEQSLSALTKLKEKLGFDQLIDVCGVDYLAFGDVTWETRKATNSGFSRGVFDFAEEDGEADTNIPRRFAVVYHLLSVENNRRVRVKVYPEDTQMPMVDSVVSVWNCADWFEREAFDLFGILFNGHPDLRRILTDYGFVGHPLRKDFPLTGHVEMRYDAEKGRVVYEPVTIENRVNVPRVIRNDVEPKG.

This sequence belongs to the complex I 30 kDa subunit family. NDH-1 is composed of 14 different subunits. Subunits NuoB, C, D, E, F, and G constitute the peripheral sector of the complex.

Its subcellular location is the cell inner membrane. It catalyses the reaction a quinone + NADH + 5 H(+)(in) = a quinol + NAD(+) + 4 H(+)(out). Its function is as follows. NDH-1 shuttles electrons from NADH, via FMN and iron-sulfur (Fe-S) centers, to quinones in the respiratory chain. The immediate electron acceptor for the enzyme in this species is believed to be ubiquinone. Couples the redox reaction to proton translocation (for every two electrons transferred, four hydrogen ions are translocated across the cytoplasmic membrane), and thus conserves the redox energy in a proton gradient. In Hydrogenovibrio crunogenus (strain DSM 25203 / XCL-2) (Thiomicrospira crunogena), this protein is NADH-quinone oxidoreductase subunit C.